The following is a 347-amino-acid chain: GMP reductase (347 aa).

108–131 (TDFEKTKQILIANPALNFLCIDVA) contacts NADP(+). 2 residues coordinate K(+): G181 and G183. The active-site Thioimidate intermediate is C186. 216–239 (IISDGGCTMPGDVAKAFGGGADFV) is a binding site for NADP(+).

This sequence belongs to the IMPDH/GMPR family. GuaC type 1 subfamily. In terms of assembly, homotetramer.

It carries out the reaction IMP + NH4(+) + NADP(+) = GMP + NADPH + 2 H(+). Catalyzes the irreversible NADPH-dependent deamination of GMP to IMP. It functions in the conversion of nucleobase, nucleoside and nucleotide derivatives of G to A nucleotides, and in maintaining the intracellular balance of A and G nucleotides. The protein is GMP reductase of Enterobacter sp. (strain 638).